A 1004-amino-acid polypeptide reads, in one-letter code: Protein Wnt-5 (1004 aa).

A signal peptide spans methionine 1–alanine 29. Asparagine 60, asparagine 66, asparagine 115, and asparagine 219 each carry an N-linked (GlcNAc...) asparagine glycan. The segment at glutamine 238 to tyrosine 298 is disordered. N-linked (GlcNAc...) asparagine glycans are attached at residues asparagine 307 and asparagine 341. The disordered stretch occupies residues leucine 310–serine 407. The span at arginine 389–phenylalanine 403 shows a compositional bias: basic and acidic residues. N-linked (GlcNAc...) asparagine glycosylation occurs at asparagine 422. A disordered region spans residues lysine 438–lysine 472. Over residues serine 458 to serine 470 the composition is skewed to low complexity. N-linked (GlcNAc...) asparagine glycans are attached at residues asparagine 484, asparagine 485, asparagine 528, and asparagine 593. 3 disulfide bridges follow: cysteine 583/cysteine 594, cysteine 633/cysteine 641, and cysteine 643/cysteine 661. An N-linked (GlcNAc...) asparagine glycan is attached at asparagine 724. Residues phenylalanine 790–serine 822 form a disordered region. 8 disulfides stabilise this stretch: cysteine 862/cysteine 876, cysteine 864/cysteine 871, cysteine 933/cysteine 964, cysteine 949/cysteine 959, cysteine 963/cysteine 1003, cysteine 979/cysteine 994, cysteine 981/cysteine 991, and cysteine 986/cysteine 987. Serine 868 carries the O-palmitoleoyl serine; by PORCN lipid modification. N-linked (GlcNAc...) asparagine glycosylation occurs at asparagine 952.

The protein belongs to the Wnt family. In terms of assembly, interacts with porcupine (por). Glycosylated, glycosylation is stimulated by porcupine at the ER. In terms of processing, palmitoleoylated by porcupine. The lipid group functions as a sorting signal, targeting the ligand to polarized vesicles that transport Wnt5 to unique sites at the cell surface. Depalmitoleoylated by notum, leading to inhibit Wnt signaling pathway. Dynamic expression pattern during embryogenesis. Expression is seen in the limb primordia of the head and thoracic segments, mesodermal and neurogenic regions.

It localises to the secreted. It is found in the extracellular space. The protein resides in the extracellular matrix. In terms of biological role, binds as a ligand to a family of frizzled seven-transmembrane receptors and acts through a cascade of genes on the nucleus. Probable developmental protein. May be a signaling molecule which affects the development of discrete regions of tissues. Is likely to signal over only few cell diameters. May have a role in limb and CNS development; may be a downstream target of Dll that acts in the specification of these primordia. The polypeptide is Protein Wnt-5 (Wnt5) (Drosophila melanogaster (Fruit fly)).